We begin with the raw amino-acid sequence, 673 residues long: Auxin response factor 9 (673 aa).

Residues 126-228 (FCKTLTASDT…ELRVGVRRLM (103 aa)) constitute a DNA-binding region (TF-B3). Disordered stretches follow at residues 356–386 (ELEPLDASNPQPPQPPLRNKRARPPASPSVV) and 514–545 (DSDQISQPSNGNKSDAPGTSSERSPLESQSRQ). Positions 516 to 545 (DQISQPSNGNKSDAPGTSSERSPLESQSRQ) are enriched in polar residues. The 93-residue stretch at 547-639 (RSCTKVIMQG…EEAKLLAPKS (93 aa)) folds into the PB1 domain.

It belongs to the ARF family. As to quaternary structure, homodimers and heterodimers. Expressed in roots, culms, leaves and young panicles.

The protein localises to the nucleus. Auxin response factors (ARFs) are transcriptional factors that bind specifically to the DNA sequence 5'-TGTCTC-3' found in the auxin-responsive promoter elements (AuxREs). This Oryza sativa subsp. japonica (Rice) protein is Auxin response factor 9 (ARF9).